A 246-amino-acid polypeptide reads, in one-letter code: Ubiquinone biosynthesis O-methyltransferase (246 aa).

The S-adenosyl-L-methionine site is built by R44, G63, D84, and M128.

This sequence belongs to the methyltransferase superfamily. UbiG/COQ3 family.

The catalysed reaction is a 3-demethylubiquinol + S-adenosyl-L-methionine = a ubiquinol + S-adenosyl-L-homocysteine + H(+). The enzyme catalyses a 3-(all-trans-polyprenyl)benzene-1,2-diol + S-adenosyl-L-methionine = a 2-methoxy-6-(all-trans-polyprenyl)phenol + S-adenosyl-L-homocysteine + H(+). It participates in cofactor biosynthesis; ubiquinone biosynthesis. Its function is as follows. O-methyltransferase that catalyzes the 2 O-methylation steps in the ubiquinone biosynthetic pathway. This is Ubiquinone biosynthesis O-methyltransferase from Xylella fastidiosa (strain 9a5c).